The primary structure comprises 622 residues: Low affinity potassium transport system protein Kup (622 aa).

12 helical membrane-spanning segments follow: residues 9–29, 46–66, 101–121, 137–157, 165–185, 213–233, 247–267, 276–296, 337–357, 363–383, 395–415, and 416–436; these read LSAV…TSPL, PDVV…VVSV, ILVV…VITP, PALD…LFVI, VGKL…LLGL, VSFF…ALYA, WFTV…ALLL, PFFL…ATLA, IYIP…IIGF, LAAA…ILFC, FLVV…FSAN, and VLKL…MFII.

The protein belongs to the HAK/KUP transporter (TC 2.A.72) family.

It localises to the cell inner membrane. It carries out the reaction K(+)(in) + H(+)(in) = K(+)(out) + H(+)(out). Responsible for the low-affinity transport of potassium into the cell. Likely operates as a K(+):H(+) symporter. In Yersinia pestis bv. Antiqua (strain Antiqua), this protein is Low affinity potassium transport system protein Kup.